The following is a 363-amino-acid chain: Cyanuric acid amidohydrolase (363 aa).

The RU A stretch occupies residues 1-103 (MKTRVTRLTV…LVFEVDDSAP (103 aa)). Substrate contacts are provided by residues Arg-51 and 82 to 83 (SG). Residues 111 to 247 (GLAAGVAFTR…NEVLVLGNAP (137 aa)) form an RU B region. Lys-161 is a catalytic residue. Substrate-binding positions include Arg-193 and 230–231 (SA). The active-site Nucleophile is Ser-230. Residues 253–363 (YRIGHAVMED…GGPLALIVRS (111 aa)) are RU C. Glu-297 is a Mg(2+) binding site. Substrate-binding positions include Arg-324 and 343 to 344 (SG). The Mg(2+) site is built by Ala-346, Gln-349, Gly-350, Pro-351, and Gly-354.

The protein belongs to the cyclic amide hydrolase (CyAH) family. Homotetramer.

It catalyses the reaction cyanurate + H2O = 1-carboxybiuret + H(+). The protein operates within xenobiotic degradation; atrazine degradation; biuret from cyanurate: step 1/1. Its activity is regulated as follows. Inhibited by barbituric acid. Functionally, responsible for the hydrolysis of cyanuric acid, an intermediate formed during catabolism of s-triazine based compounds in herbicides such as atrazine and polymers such as melamine. Catalyzes the hydrolytic opening of the s-triazine ring of cyanuric acid (2,4,6-trihydroxy-s-triazine) to yield carbon dioxide and carboxybiuret, which spontaneously decarboxylates to biuret. In Ectopseudomonas oleovorans (strain CECT 5344) (Pseudomonas pseudoalcaligenes), this protein is Cyanuric acid amidohydrolase.